Reading from the N-terminus, the 504-residue chain is Maturase K (504 aa).

It belongs to the intron maturase 2 family. MatK subfamily.

It is found in the plastid. The protein resides in the chloroplast. Functionally, usually encoded in the trnK tRNA gene intron. Probably assists in splicing its own and other chloroplast group II introns. The sequence is that of Maturase K from Chimaphila umbellata (Pipsissewa).